Consider the following 160-residue polypeptide: Baculoviral IAP repeat-containing protein 5.1 (160 aa).

A BIR repeat occupies 27 to 97; it reads RLATFADWPF…KRSASCGFLS (71 aa). Thr-43 is modified (phosphothreonine; by CDK1). Zn(2+) contacts are provided by Cys-66, Cys-69, His-86, and Cys-93.

It belongs to the IAP family. In terms of assembly, component of the CPC at least composed of survivin/birc5, incenp, cdca8/borealin and/or cdca9/dasra-A, and aurkb/aurora-B. Interacts directly with incenp (via N-terminus), and may weakly interact with aurkb (via N-terminus) to stabilize the complex. Interacts with GTP-bound ran in both the S and M phases of the cell cycle. Also found in a complex with ubiquitin-mediated signaling proteins including at least usp9x/xFAM, nploc4/npl4 and ufd1. Post-translationally, ubiquitination is required for centrosome-targeting.

It localises to the cytoplasm. The protein resides in the nucleus. Its subcellular location is the chromosome. The protein localises to the centromere. It is found in the cytoskeleton. It localises to the spindle. Component of the chromosomal passenger complex (CPC), a complex that acts as a key regulator of mitosis. The CPC complex has essential functions at the centromere in ensuring correct chromosome alignment and segregation and is required for chromatin-induced microtubule stabilization and spindle assembly. Stimulates the mitotic kinase activity of aurkb/aurora-B in the CPC. Does not appear to exhibit anti-apoptotic activity. This Xenopus tropicalis (Western clawed frog) protein is Baculoviral IAP repeat-containing protein 5.1 (birc5.1).